A 492-amino-acid chain; its full sequence is AAA-ATPase At3g28520 (492 aa).

The helical transmembrane segment at 7 to 25 threads the bilayer; it reads IWGFTSTTMASIMFLWPMY. An ATP-binding site is contributed by 249-256; it reads GPPGTGKS. Disordered regions lie at residues 313-334 and 462-492; these read KKKK…LKRV and KIEK…MVTK. Composition is skewed to basic and acidic residues over residues 323-332 and 462-484; these read EEKKEAENLK and KIEK…EKQN.

This sequence belongs to the AAA ATPase family. BCS1 subfamily. Mg(2+) is required as a cofactor.

It localises to the membrane. The enzyme catalyses ATP + H2O = ADP + phosphate + H(+). The polypeptide is AAA-ATPase At3g28520 (Arabidopsis thaliana (Mouse-ear cress)).